The following is a 612-amino-acid chain: Dihydroxy-acid dehydratase (612 aa).

D81 contacts Mg(2+). C122 serves as a coordination point for [2Fe-2S] cluster. D123 and K124 together coordinate Mg(2+). An N6-carboxylysine modification is found at K124. C193 is a [2Fe-2S] cluster binding site. E489 serves as a coordination point for Mg(2+). The active-site Proton acceptor is S515.

This sequence belongs to the IlvD/Edd family. As to quaternary structure, homodimer. [2Fe-2S] cluster serves as cofactor. The cofactor is Mg(2+).

The enzyme catalyses (2R)-2,3-dihydroxy-3-methylbutanoate = 3-methyl-2-oxobutanoate + H2O. It carries out the reaction (2R,3R)-2,3-dihydroxy-3-methylpentanoate = (S)-3-methyl-2-oxopentanoate + H2O. The protein operates within amino-acid biosynthesis; L-isoleucine biosynthesis; L-isoleucine from 2-oxobutanoate: step 3/4. It functions in the pathway amino-acid biosynthesis; L-valine biosynthesis; L-valine from pyruvate: step 3/4. Functionally, functions in the biosynthesis of branched-chain amino acids. Catalyzes the dehydration of (2R,3R)-2,3-dihydroxy-3-methylpentanoate (2,3-dihydroxy-3-methylvalerate) into 2-oxo-3-methylpentanoate (2-oxo-3-methylvalerate) and of (2R)-2,3-dihydroxy-3-methylbutanoate (2,3-dihydroxyisovalerate) into 2-oxo-3-methylbutanoate (2-oxoisovalerate), the penultimate precursor to L-isoleucine and L-valine, respectively. The sequence is that of Dihydroxy-acid dehydratase from Pseudomonas aeruginosa (strain LESB58).